A 778-amino-acid chain; its full sequence is Jhy protein homolog (778 aa).

4 disordered regions span residues 62–271 (DRIR…PKTD), 334–408 (QYES…LDTS), 631–654 (EKGK…QKRD), and 721–746 (IPKP…AGKE). The span at 118–139 (PIEDKYSDLRYDPNWKSKKEEG) shows a compositional bias: basic and acidic residues. Residues 223–234 (SSLSPYVKSSSS) are compositionally biased toward low complexity. Positions 334–344 (QYESTKSSNVP) are enriched in polar residues. Residues 358–371 (SRRPAKLKIRKQCK) are compositionally biased toward basic residues. A compositionally biased stretch (polar residues) spans 375-389 (GLKSSTTEEVTASQG). Over residues 390–402 (NQNNPPRQQQNQN) the composition is skewed to low complexity. Residues 633–650 (GKKHKKRSSSKNTKLKGY) are compositionally biased toward basic residues. A compositionally biased stretch (basic and acidic residues) spans 733–746 (ASKEQKNPTYAGKE).

In terms of biological role, required for the normal development of cilia in brain ependymal cells lining the ventricular surfaces. The polypeptide is Jhy protein homolog (Homo sapiens (Human)).